The chain runs to 183 residues: Acidic proline-rich protein HP43A (183 aa).

The N-terminal stretch at 1 to 14 (MLVVLLTAALLAEH) is a signal peptide. The interval 22 to 183 (ISQLSEEEQQ…QGSEEQSTSL (162 aa)) is disordered. Residues 52 to 65 (SDEEGDDDGEEDGN) show a composition bias toward acidic residues. A run of 5 repeats spans residues 81 to 100 (RPPKPGNQQGPPQQEGQQQN), 101 to 120 (RPPKPGNQEGPPQQEGQQQN), 121 to 140 (RPPKPGNQEGPPQQEGQQQN), 141 to 160 (RPPKPGNQEGPPQQEGQQQN), and 161 to 180 (RPPKPGNQEGPPQQGSEEQS). The segment covering 86 to 183 (GNQQGPPQQE…QGSEEQSTSL (98 aa)) has biased composition (low complexity).

Its subcellular location is the secreted. This chain is Acidic proline-rich protein HP43A (H29), found in Mesocricetus auratus (Golden hamster).